The following is a 769-amino-acid chain: Wall-associated receptor kinase-like 10 (769 aa).

The signal sequence occupies residues 1-24; sequence MSSNCSCSLLSLFSLLLIIDLTVA. Topologically, residues 25 to 358 are extracellular; the sequence is SSCPKTCGGI…YTCEYTNHRP (334 aa). 8 N-linked (GlcNAc...) asparagine glycosylation sites follow: N58, N114, N134, N182, N187, N237, N262, and N296. Residues 291-351 form an atypical EGF-like region; the sequence is CLCDYNSTTT…CVNLLGGYTC (61 aa). 3 disulfides stabilise this stretch: C293/C305, C327/C342, and C337/C351. The helical transmembrane segment at 359-379 threads the bilayer; that stretch reads LVIGLSTSFSTLVFIGGIYWL. Residues 380 to 769 are Cytoplasmic-facing; that stretch reads YKFIRRQRRL…RSDVEPLFPR (390 aa). A Protein kinase domain is found at 433–718; it reads FSLTRILGEG…SYSEDMQPYE (286 aa). Residues 439 to 447 and K461 contribute to the ATP site; that span reads LGEGGQGTV. At Y506 the chain carries Phosphotyrosine. The Proton acceptor role is filled by D559. Phosphothreonine occurs at positions 593 and 598. Y606 is modified (phosphotyrosine).

The protein belongs to the protein kinase superfamily. Ser/Thr protein kinase family.

The protein localises to the membrane. It catalyses the reaction L-seryl-[protein] + ATP = O-phospho-L-seryl-[protein] + ADP + H(+). It carries out the reaction L-threonyl-[protein] + ATP = O-phospho-L-threonyl-[protein] + ADP + H(+). In terms of biological role, serine/threonine-protein kinase that may function as a signaling receptor of extracellular matrix component. The sequence is that of Wall-associated receptor kinase-like 10 (WAKL10) from Arabidopsis thaliana (Mouse-ear cress).